We begin with the raw amino-acid sequence, 185 residues long: Elongation factor P (185 aa).

It belongs to the elongation factor P family.

It is found in the cytoplasm. It functions in the pathway protein biosynthesis; polypeptide chain elongation. Involved in peptide bond synthesis. Stimulates efficient translation and peptide-bond synthesis on native or reconstituted 70S ribosomes in vitro. Probably functions indirectly by altering the affinity of the ribosome for aminoacyl-tRNA, thus increasing their reactivity as acceptors for peptidyl transferase. This Bordetella bronchiseptica (strain ATCC BAA-588 / NCTC 13252 / RB50) (Alcaligenes bronchisepticus) protein is Elongation factor P.